The following is a 296-amino-acid chain: N-acetylmuramic acid 6-phosphate etherase 2 (296 aa).

Residues 55 to 218 (IIKSFNQGGR…STISMIGIGK (164 aa)) enclose the SIS domain. The active-site Proton donor is Glu-83. Residue Glu-114 is part of the active site.

It belongs to the GCKR-like family. MurNAc-6-P etherase subfamily. Homodimer.

The enzyme catalyses N-acetyl-D-muramate 6-phosphate + H2O = N-acetyl-D-glucosamine 6-phosphate + (R)-lactate. Its pathway is amino-sugar metabolism; N-acetylmuramate degradation. In terms of biological role, specifically catalyzes the cleavage of the D-lactyl ether substituent of MurNAc 6-phosphate, producing GlcNAc 6-phosphate and D-lactate. The sequence is that of N-acetylmuramic acid 6-phosphate etherase 2 from Enterococcus faecalis (strain ATCC 700802 / V583).